The chain runs to 401 residues: Argininosuccinate synthase (401 aa).

ATP is bound by residues 7–15 (AYSGGLDTS) and Ala-34. Residues Tyr-85 and Ser-90 each coordinate L-citrulline. Residue Gly-115 participates in ATP binding. L-aspartate is bound by residues Thr-117, Asn-121, and Asp-122. Asn-121 lines the L-citrulline pocket. L-citrulline-binding residues include Arg-125, Ser-174, Ser-183, Glu-259, and Tyr-271.

This sequence belongs to the argininosuccinate synthase family. Type 1 subfamily. Homotetramer.

The protein localises to the cytoplasm. The catalysed reaction is L-citrulline + L-aspartate + ATP = 2-(N(omega)-L-arginino)succinate + AMP + diphosphate + H(+). The protein operates within amino-acid biosynthesis; L-arginine biosynthesis; L-arginine from L-ornithine and carbamoyl phosphate: step 2/3. This Desulfitobacterium hafniense (strain DSM 10664 / DCB-2) protein is Argininosuccinate synthase.